Consider the following 361-residue polypeptide: Probable cysteine protease RD19B (361 aa).

Positions 1–24 (MDYHLRVLFSVSLIFVFVSVSVCG) are cleaved as a signal peptide. The propeptide at 25 to 131 (DEDVLIRQVV…NQAPILPTQN (107 aa)) is activation peptide. 2 cysteine pairs are disulfide-bonded: cysteine 153–cysteine 203 and cysteine 187–cysteine 237. The active site involves cysteine 156. Residue asparagine 250 is glycosylated (N-linked (GlcNAc...) asparagine). Residues cysteine 293 and cysteine 347 are joined by a disulfide bond. Residues histidine 299 and asparagine 326 contribute to the active site.

It belongs to the peptidase C1 family.

It localises to the lytic vacuole. Its function is as follows. Probable thiol protease. This chain is Probable cysteine protease RD19B, found in Arabidopsis thaliana (Mouse-ear cress).